The primary structure comprises 346 residues: Enoyl-[acyl-carrier-protein] reductase, mitochondrial (346 aa).

A mitochondrion-targeting transit peptide spans 1 to 22 (MQKTIRSQALIYRKFGDPLKVL). Y59 (proton donor) is an active-site residue. Residues N131, 157-160 (NSGV), 180-182 (RNR), 249-252 (YGGM), 274-276 (VAV), and K332 contribute to the NADP(+) site.

The protein belongs to the zinc-containing alcohol dehydrogenase family. Quinone oxidoreductase subfamily. In terms of assembly, homodimer.

It is found in the mitochondrion. The catalysed reaction is a 2,3-saturated acyl-[ACP] + NADP(+) = a (2E)-enoyl-[ACP] + NADPH + H(+). Catalyzes the NADPH-dependent reduction of trans-2-enoyl thioesters in mitochondrial fatty acid synthesis (fatty acid synthesis type II). Fatty acid chain elongation in mitochondria uses acyl carrier protein (ACP) as an acyl group carrier, but the enzyme accepts both ACP and CoA thioesters as substrates in vitro. May provide the octanoyl chain used for lipoic acid biosynthesis, regulating protein lipoylation and mitochondrial respiratory activity. Involved in iron homeostasis; affecting Fe-S cluster assembly and ceramide metabolism. Required for proper morphology and bioenergetic functions of mitochondria. Required for maintenance of neurons. The polypeptide is Enoyl-[acyl-carrier-protein] reductase, mitochondrial (Caenorhabditis elegans).